Consider the following 419-residue polypeptide: Testin (419 aa).

The region spanning 92 to 199 (MILTNPVAAK…GDVKLPSEMN (108 aa)) is the PET domain. 2 disordered regions span residues 133 to 164 (EKQPVAGSEGAQYRKKQLAKQLPAHDQDPSKC) and 199 to 222 (NAQGDKVHNPAGDRNTPAAVGSKD). Residues 155 to 164 (PAHDQDPSKC) show a composition bias toward basic and acidic residues. 3 consecutive LIM zinc-binding domains span residues 232–295 (YSCY…CDSE), 297–357 (PRCA…NHAV), and 360–419 (QGCH…KMMS).

Belongs to the prickle / espinas / testin family. As to quaternary structure, interacts via LIM domain 1 with ZYX. Interacts (via LIM domain 3) with ENAH and VASP. Interacts with ALKBH4, talin, actin, alpha-actinin, GRIP1 and PXN. Interacts (via LIM domain 2) with ACTL7A (via N-terminus). Heterodimer with ACTL7A; the heterodimer interacts with ENAH to form a heterotrimer.

The protein localises to the cytoplasm. Its subcellular location is the cell junction. The protein resides in the focal adhesion. Its function is as follows. Scaffold protein that may play a role in cell adhesion, cell spreading and in the reorganization of the actin cytoskeleton. Plays a role in the regulation of cell proliferation. May act as a tumor suppressor. The polypeptide is Testin (Tes) (Rattus norvegicus (Rat)).